The primary structure comprises 65 residues: Large ribosomal subunit protein uL29 (65 aa).

It belongs to the universal ribosomal protein uL29 family.

This Coxiella burnetii (strain CbuK_Q154) (Coxiella burnetii (strain Q154)) protein is Large ribosomal subunit protein uL29.